The following is a 142-amino-acid chain: Putative pre-16S rRNA nuclease (142 aa).

Belongs to the YqgF nuclease family.

It is found in the cytoplasm. In terms of biological role, could be a nuclease involved in processing of the 5'-end of pre-16S rRNA. The protein is Putative pre-16S rRNA nuclease of Mycoplasmoides gallisepticum (strain R(low / passage 15 / clone 2)) (Mycoplasma gallisepticum).